The chain runs to 506 residues: Arabinose import ATP-binding protein AraG (506 aa).

ABC transporter domains lie at leucine 10–arginine 245 and tyrosine 253–asparagine 501. Glycine 42 to serine 49 provides a ligand contact to ATP.

This sequence belongs to the ABC transporter superfamily. Arabinose importer (TC 3.A.1.2.2) family. In terms of assembly, the complex is composed of two ATP-binding proteins (AraG), two transmembrane proteins (AraH) and a solute-binding protein (AraF).

It is found in the cell inner membrane. The enzyme catalyses L-arabinose(out) + ATP + H2O = L-arabinose(in) + ADP + phosphate + H(+). In terms of biological role, part of the ABC transporter complex AraFGH involved in arabinose import. Responsible for energy coupling to the transport system. The chain is Arabinose import ATP-binding protein AraG from Vibrio parahaemolyticus serotype O3:K6 (strain RIMD 2210633).